The following is a 421-amino-acid chain: Gamma-glutamyl phosphate reductase (421 aa).

It belongs to the gamma-glutamyl phosphate reductase family.

It is found in the cytoplasm. It carries out the reaction L-glutamate 5-semialdehyde + phosphate + NADP(+) = L-glutamyl 5-phosphate + NADPH + H(+). Its pathway is amino-acid biosynthesis; L-proline biosynthesis; L-glutamate 5-semialdehyde from L-glutamate: step 2/2. In terms of biological role, catalyzes the NADPH-dependent reduction of L-glutamate 5-phosphate into L-glutamate 5-semialdehyde and phosphate. The product spontaneously undergoes cyclization to form 1-pyrroline-5-carboxylate. This chain is Gamma-glutamyl phosphate reductase, found in Acinetobacter baumannii (strain ACICU).